Consider the following 324-residue polypeptide: Adenine deaminase (324 aa).

The Zn(2+) site is built by H11, H13, and H189. The Proton donor role is filled by E192. Residue D270 participates in Zn(2+) binding. Position 271 (D271) interacts with substrate.

The protein belongs to the metallo-dependent hydrolases superfamily. Adenosine and AMP deaminases family. Adenine deaminase type 2 subfamily. Zn(2+) serves as cofactor.

The enzyme catalyses adenine + H2O + H(+) = hypoxanthine + NH4(+). Its function is as follows. Catalyzes the hydrolytic deamination of adenine to hypoxanthine. Plays an important role in the purine salvage pathway and in nitrogen catabolism. In Sinorhizobium fredii (strain NBRC 101917 / NGR234), this protein is Adenine deaminase.